Reading from the N-terminus, the 72-residue chain is Crustacean hyperglycemic hormone (72 aa).

Intrachain disulfides connect Cys7–Cys43, Cys23–Cys39, and Cys26–Cys52. At Val72 the chain carries Valine amide.

The protein resides in the secreted. Its function is as follows. Hormone found in the sinus gland of isopods and decapods which controls the blood sugar level. Has a secretagogue action over the amylase released from the midgut gland. May act as a stress hormone and may be involved in the control of molting and reproduction. In Penaeus schmitti (White shrimp), this protein is Crustacean hyperglycemic hormone.